A 132-amino-acid polypeptide reads, in one-letter code: Small ribosomal subunit protein uS8 (132 aa).

The protein belongs to the universal ribosomal protein uS8 family. In terms of assembly, part of the 30S ribosomal subunit. Contacts proteins S5 and S12.

Functionally, one of the primary rRNA binding proteins, it binds directly to 16S rRNA central domain where it helps coordinate assembly of the platform of the 30S subunit. The chain is Small ribosomal subunit protein uS8 from Streptococcus pyogenes serotype M49 (strain NZ131).